Consider the following 77-residue polypeptide: uncharacterized protein (77 aa).

This is an uncharacterized protein from Bacillus subtilis (strain 168).